The primary structure comprises 146 residues: Gonadotropin subunit beta-2 (146 aa).

The first 28 residues, 1-28, serve as a signal peptide directing secretion; the sequence is TGTPVKILVVRNILLLLFCLVVLLVFAQ. Cystine bridges form between C35–C83, C49–C98, C52–C136, C60–C114, C64–C116, and C119–C126. N39 carries N-linked (GlcNAc...) asparagine glycosylation.

It belongs to the glycoprotein hormones subunit beta family. In terms of assembly, heterodimer of an alpha and a beta chain.

It localises to the secreted. Involved in gametogenesis and steroidogenesis. The chain is Gonadotropin subunit beta-2 (cgbb) from Ctenopharyngodon idella (Grass carp).